Here is a 129-residue protein sequence, read N- to C-terminus: Glycoprotein hormone alpha-2 (129 aa).

A signal peptide spans 1–23; the sequence is MPMASPQTLVLYLLVLAVTEAWG. Cystine bridges form between C31/C89, C48/C103, C57/C119, and C61/C121. 2 N-linked (GlcNAc...) asparagine glycosylation sites follow: N37 and N81.

It belongs to the glycoprotein hormones subunit alpha family. Heterodimer with GPHB5; this heterodimer interacts with thyroid-stimulating hormone receptor (TSHR), and hence stimulates cAMP production. Post-translationally, glycosylated. In terms of tissue distribution, found in a variety of tissues.

It localises to the secreted. Functionally, functions as a heterodimeric glycoprotein hormone with GPHB5 able to bind and activate the thyroid-stimulating hormone receptor (TSHR), leading to increased cAMP production. Plays a central role in controlling thyroid cell metabolism. The polypeptide is Glycoprotein hormone alpha-2 (GPHA2) (Homo sapiens (Human)).